We begin with the raw amino-acid sequence, 390 residues long: Homeobox protein Meis1 (390 aa).

Positions 108 to 191 (GGDVCSSESF…PIDLVIDDRD (84 aa)) constitute an MEIS N-terminal domain. Positions 188 to 202 (DDRDGGSKSDSEDLT) are enriched in basic and acidic residues. The disordered stretch occupies residues 188-279 (DDRDGGSKSD…KKRNKGRGIF (92 aa)). A DNA-binding region (homeobox; TALE-type) is located at residues 272-334 (RNKGRGIFPK…NARRRIVQPM (63 aa)). The segment at 299-329 (YPSEEQKKQLAQDTGLTILQVNNWFINARRR) is interaction with DNA.

This sequence belongs to the TALE/MEIS homeobox family. As to quaternary structure, interacts with pbx1 isoform b. As to expression, in the embryo, displays a broad expression pattern with high levels observed in tissues of neural cell fate such as midbrain, hindbrain, dorsal portion of the neural tube, and neural crest-derived branchial arches. Widely expressed in the adult with highest levels in brain and spleen.

It is found in the cytoplasm. The protein resides in the nucleus. In terms of biological role, induces expression of a number of neural crest marker genes as part of a heterodimer with isoform b of pbx1, to specify neural crest cell fate. Binds to a highly conserved region in the promoter of the neural crest marker gene zic3. The protein is Homeobox protein Meis1 (meis1) of Xenopus laevis (African clawed frog).